The primary structure comprises 139 residues: D-ribose pyranase (139 aa).

Residue His-20 is the Proton donor of the active site. Substrate is bound by residues Asp-28, His-106, and Tyr-128–Asn-130.

The protein belongs to the RbsD / FucU family. RbsD subfamily. As to quaternary structure, homodecamer.

It is found in the cytoplasm. The catalysed reaction is beta-D-ribopyranose = beta-D-ribofuranose. It functions in the pathway carbohydrate metabolism; D-ribose degradation; D-ribose 5-phosphate from beta-D-ribopyranose: step 1/2. Its function is as follows. Catalyzes the interconversion of beta-pyran and beta-furan forms of D-ribose. This Enterobacter sp. (strain 638) protein is D-ribose pyranase.